Here is a 488-residue protein sequence, read N- to C-terminus: Protein nucleotidyltransferase YdiU (488 aa).

8 residues coordinate ATP: Gly91, Gly93, Arg94, Lys114, Asp126, Gly127, Arg177, and Arg184. Asp253 serves as the catalytic Proton acceptor. Mg(2+) is bound by residues Asn254 and Asp263. ATP is bound at residue Asp263.

The protein belongs to the SELO family. Mg(2+) is required as a cofactor. Requires Mn(2+) as cofactor.

It catalyses the reaction L-seryl-[protein] + ATP = 3-O-(5'-adenylyl)-L-seryl-[protein] + diphosphate. The catalysed reaction is L-threonyl-[protein] + ATP = 3-O-(5'-adenylyl)-L-threonyl-[protein] + diphosphate. It carries out the reaction L-tyrosyl-[protein] + ATP = O-(5'-adenylyl)-L-tyrosyl-[protein] + diphosphate. The enzyme catalyses L-histidyl-[protein] + UTP = N(tele)-(5'-uridylyl)-L-histidyl-[protein] + diphosphate. It catalyses the reaction L-seryl-[protein] + UTP = O-(5'-uridylyl)-L-seryl-[protein] + diphosphate. The catalysed reaction is L-tyrosyl-[protein] + UTP = O-(5'-uridylyl)-L-tyrosyl-[protein] + diphosphate. Its function is as follows. Nucleotidyltransferase involved in the post-translational modification of proteins. It can catalyze the addition of adenosine monophosphate (AMP) or uridine monophosphate (UMP) to a protein, resulting in modifications known as AMPylation and UMPylation. The protein is Protein nucleotidyltransferase YdiU of Bacillus cereus (strain B4264).